We begin with the raw amino-acid sequence, 238 residues long: Ras association domain-containing protein 3 (238 aa).

An N-acetylserine modification is found at Ser2. The segment at Arg26 to Tyr48 is disordered. The span at Asp38–Tyr48 shows a compositional bias: basic and acidic residues. A Ras-associating domain is found at Tyr79–Glu186. One can recognise an SARAH domain in the interval Ile187–Val234.

As to expression, widely expressed.

It is found in the cytoplasm. It localises to the cytoskeleton. The sequence is that of Ras association domain-containing protein 3 (RASSF3) from Homo sapiens (Human).